Reading from the N-terminus, the 222-residue chain is Large ribosomal subunit protein uL3 (222 aa).

Residues His129 to Ile150 form a disordered region.

It belongs to the universal ribosomal protein uL3 family. As to quaternary structure, part of the 50S ribosomal subunit. Forms a cluster with proteins L14 and L19.

Its function is as follows. One of the primary rRNA binding proteins, it binds directly near the 3'-end of the 23S rRNA, where it nucleates assembly of the 50S subunit. In Acidothermus cellulolyticus (strain ATCC 43068 / DSM 8971 / 11B), this protein is Large ribosomal subunit protein uL3.